Here is a 523-residue protein sequence, read N- to C-terminus: Polypyrimidine tract-binding protein 3 (523 aa).

Positions 1 to 25 (MNNSTSAGVYANGNDNKKFKGDRPP) are disordered. RRM domains lie at 30–114 (RVLH…NLPN), 153–229 (LRII…FSKL), and 329–403 (SVLL…LSKH). Residue Lys36 forms a Glycyl lysine isopeptide (Lys-Gly) (interchain with G-Cter in SUMO2) linkage. Position 98 is a phosphotyrosine (Tyr98). The residue at position 109 (Thr109) is a Phosphothreonine. Lys187 participates in a covalent cross-link: Glycyl lysine isopeptide (Lys-Gly) (interchain with G-Cter in SUMO2). Lys394 carries the post-translational modification N6-acetyllysine. The interval 406-426 (VQLPREGQEDQGLTKDFSNSP) is disordered. A Phosphoserine modification is found at Ser425. Residues 446 to 521 (ATLHLSNIPP…HHLRVSFSKS (76 aa)) form the RRM 4 domain.

As to quaternary structure, interacts with THBS4 (via the acidic amphipathic C-terminus). Detected specifically in spleen, thymus, lungs, and bone marrow.

Its function is as follows. RNA-binding protein that mediates pre-mRNA alternative splicing regulation. Plays a role in the regulation of cell proliferation, differentiation and migration. Positive regulator of EPO-dependent erythropoiesis. Participates in cell differentiation regulation by repressing tissue-specific exons. Promotes Fas exon 6 skipping. Binds RNA, preferentially to both poly(G) and poly(U). The sequence is that of Polypyrimidine tract-binding protein 3 (Ptbp3) from Rattus norvegicus (Rat).